A 76-amino-acid polypeptide reads, in one-letter code: Acyl carrier protein (76 aa).

The Carrier domain maps to 2-76; sequence SDIAERVKKI…QAIDYIQSHT (75 aa). At Ser-36 the chain carries O-(pantetheine 4'-phosphoryl)serine.

The protein belongs to the acyl carrier protein (ACP) family. In terms of processing, 4'-phosphopantetheine is transferred from CoA to a specific serine of apo-ACP by AcpS. This modification is essential for activity because fatty acids are bound in thioester linkage to the sulfhydryl of the prosthetic group.

It is found in the cytoplasm. It functions in the pathway lipid metabolism; fatty acid biosynthesis. In terms of biological role, carrier of the growing fatty acid chain in fatty acid biosynthesis. This chain is Acyl carrier protein, found in Methylococcus capsulatus (strain ATCC 33009 / NCIMB 11132 / Bath).